Reading from the N-terminus, the 75-residue chain is Putative antitoxin VapB12 (75 aa).

Functionally, putative antitoxin component of a possible type II toxin-antitoxin (TA) system. The cognate toxin is VapC12. The chain is Putative antitoxin VapB12 (vapB12) from Mycobacterium tuberculosis (strain CDC 1551 / Oshkosh).